A 172-amino-acid chain; its full sequence is Cytochrome c oxidase subunit 4 isoform 2, mitochondrial (172 aa).

The transit peptide at 1-18 directs the protein to the mitochondrion; the sequence is MFSRATRSLVMKTGGLRT. A disordered region spans residues 1–33; sequence MFSRATRSLVMKTGGLRTQGTHSPGSAASSSQR. Polar residues predominate over residues 16-33; that stretch reads LRTQGTHSPGSAASSSQR. Topologically, residues 19–101 are mitochondrial matrix; that stretch reads QGTHSPGSAA…TFAEMNHRSN (83 aa). A helical membrane pass occupies residues 102-127; that stretch reads EWKTVMGCVFFFIGFTALVIWWQRVY. At 128-172 the chain is on the mitochondrial intermembrane side; sequence VFPKKVVTLTEERKAQQLQRLLDMKSNPIQGLSAHWDYEKKEWKK.

The protein belongs to the cytochrome c oxidase IV family. As to quaternary structure, component of the cytochrome c oxidase (complex IV, CIV), a multisubunit enzyme composed of 14 subunits. The complex is composed of a catalytic core of 3 subunits MT-CO1, MT-CO2 and MT-CO3, encoded in the mitochondrial DNA, and 11 supernumerary subunits COX4I, COX5A, COX5B, COX6A, COX6B, COX6C, COX7A, COX7B, COX7C, COX8 and NDUFA4, which are encoded in the nuclear genome. The complex exists as a monomer or a dimer and forms supercomplexes (SCs) in the inner mitochondrial membrane with NADH-ubiquinone oxidoreductase (complex I, CI) and ubiquinol-cytochrome c oxidoreductase (cytochrome b-c1 complex, complex III, CIII), resulting in different assemblies (supercomplex SCI(1)III(2)IV(1) and megacomplex MCI(2)III(2)IV(2)). As to expression, highly expressed in lung.

The protein localises to the mitochondrion inner membrane. Its pathway is energy metabolism; oxidative phosphorylation. Component of the cytochrome c oxidase, the last enzyme in the mitochondrial electron transport chain which drives oxidative phosphorylation. The respiratory chain contains 3 multisubunit complexes succinate dehydrogenase (complex II, CII), ubiquinol-cytochrome c oxidoreductase (cytochrome b-c1 complex, complex III, CIII) and cytochrome c oxidase (complex IV, CIV), that cooperate to transfer electrons derived from NADH and succinate to molecular oxygen, creating an electrochemical gradient over the inner membrane that drives transmembrane transport and the ATP synthase. Cytochrome c oxidase is the component of the respiratory chain that catalyzes the reduction of oxygen to water. Electrons originating from reduced cytochrome c in the intermembrane space (IMS) are transferred via the dinuclear copper A center (CU(A)) of subunit 2 and heme A of subunit 1 to the active site in subunit 1, a binuclear center (BNC) formed by heme A3 and copper B (CU(B)). The BNC reduces molecular oxygen to 2 water molecules using 4 electrons from cytochrome c in the IMS and 4 protons from the mitochondrial matrix. This Rattus norvegicus (Rat) protein is Cytochrome c oxidase subunit 4 isoform 2, mitochondrial (Cox4i2).